Reading from the N-terminus, the 390-residue chain is Phosphoglycerate kinase (390 aa).

Residues 19–21 (DYN), Arg-34, 57–60 (HLGR), Arg-115, and Arg-148 contribute to the substrate site. ATP contacts are provided by residues Lys-198, Gly-289, Glu-320, and 347–350 (GGDS).

Belongs to the phosphoglycerate kinase family. As to quaternary structure, monomer.

Its subcellular location is the cytoplasm. The catalysed reaction is (2R)-3-phosphoglycerate + ATP = (2R)-3-phospho-glyceroyl phosphate + ADP. It functions in the pathway carbohydrate degradation; glycolysis; pyruvate from D-glyceraldehyde 3-phosphate: step 2/5. This chain is Phosphoglycerate kinase, found in Thermus thermophilus (strain ATCC BAA-163 / DSM 7039 / HB27).